A 362-amino-acid chain; its full sequence is Histidine protein methyltransferase 1 homolog (362 aa).

The segment at T18–K88 is disordered. The span at Q30–W51 shows a compositional bias: basic and acidic residues. Residues K52 to T65 are compositionally biased toward polar residues. Phosphoserine occurs at positions 62 and 67. Over residues D73–K82 the composition is skewed to basic and acidic residues. H144 carries the tele-methylhistidine modification. Residues I158–T162, G185, and Q206–Y208 contribute to the S-adenosyl-L-methionine site. Positions P237–R243 match the Nuclear localization signal motif. S-adenosyl-L-methionine-binding positions include G259–W261 and S283.

This sequence belongs to the methyltransferase superfamily. METTL18 family. As to quaternary structure, interacts with GRWD1 and members of the heat shock protein 90 and 70 families; these proteins may possibly be methylation substrates for the enzyme. In terms of processing, monomethylated at His-144 through automethylation. Automethylation at His-144 positively regulates the methyltransferase activity toward RPL3. Probably methylated on other residues.

It is found in the cytoplasm. Its subcellular location is the cytosol. The protein resides in the nucleus. The protein localises to the nucleolus. The catalysed reaction is L-histidyl-[protein] + S-adenosyl-L-methionine = N(tele)-methyl-L-histidyl-[protein] + S-adenosyl-L-homocysteine + H(+). In terms of biological role, protein-L-histidine N-tele-methyltransferase that specifically monomethylates RPL3, thereby regulating translation elongation. Histidine methylation of RPL3 regulates translation elongation by slowing ribosome traversal on tyrosine codons: slower elongation provides enough time for proper folding of synthesized proteins and prevents cellular aggregation of tyrosine-rich proteins. In Mus musculus (Mouse), this protein is Histidine protein methyltransferase 1 homolog.